The sequence spans 110 residues: MQVSATHRFARISPQKARLVADLIRGKDVETAVNILAFSDKKASELMSKVLNSAIANAENNEGADIDELKVTEAYVNEGPIMKRMRARAKGRGNRILKRISHITVTVGDK.

Belongs to the universal ribosomal protein uL22 family. In terms of assembly, part of the 50S ribosomal subunit.

Functionally, this protein binds specifically to 23S rRNA; its binding is stimulated by other ribosomal proteins, e.g. L4, L17, and L20. It is important during the early stages of 50S assembly. It makes multiple contacts with different domains of the 23S rRNA in the assembled 50S subunit and ribosome. The globular domain of the protein is located near the polypeptide exit tunnel on the outside of the subunit, while an extended beta-hairpin is found that lines the wall of the exit tunnel in the center of the 70S ribosome. In Hydrogenovibrio crunogenus (strain DSM 25203 / XCL-2) (Thiomicrospira crunogena), this protein is Large ribosomal subunit protein uL22.